The sequence spans 244 residues: ATP synthase subunit a, chloroplastic (244 aa).

Helical transmembrane passes span 35–55 (QVLITSWVVIAILLGSAAIAV), 92–112 (VPFIGTLFLFIFVSNWSGALL), 131–151 (INTTVALALLTSVAYFYAGIT), 196–216 (LVVVVLVSLVPLVVPIPVMFL), and 217–237 (GLFTSGIQALIFATLAAAYIG).

Belongs to the ATPase A chain family. As to quaternary structure, F-type ATPases have 2 components, CF(1) - the catalytic core - and CF(0) - the membrane proton channel. CF(1) has five subunits: alpha(3), beta(3), gamma(1), delta(1), epsilon(1). CF(0) has four main subunits: a, b, b' and c.

The protein resides in the plastid. It localises to the chloroplast thylakoid membrane. Key component of the proton channel; it plays a direct role in the translocation of protons across the membrane. The sequence is that of ATP synthase subunit a, chloroplastic from Coffea arabica (Arabian coffee).